We begin with the raw amino-acid sequence, 306 residues long: N-acetylmuramic acid 6-phosphate etherase (306 aa).

Positions 59–222 constitute an SIS domain; that stretch reads TSQALAKGGR…STGTMVMLGK (164 aa). Glutamate 87 (proton donor) is an active-site residue. Residue glutamate 118 is part of the active site.

It belongs to the GCKR-like family. MurNAc-6-P etherase subfamily. Homodimer.

It catalyses the reaction N-acetyl-D-muramate 6-phosphate + H2O = N-acetyl-D-glucosamine 6-phosphate + (R)-lactate. Its pathway is amino-sugar metabolism; N-acetylmuramate degradation. Specifically catalyzes the cleavage of the D-lactyl ether substituent of MurNAc 6-phosphate, producing GlcNAc 6-phosphate and D-lactate. This Microcystis aeruginosa (strain NIES-843 / IAM M-2473) protein is N-acetylmuramic acid 6-phosphate etherase.